The sequence spans 190 residues: Elongation factor P 2 (190 aa).

This sequence belongs to the elongation factor P family.

It is found in the cytoplasm. It functions in the pathway protein biosynthesis; polypeptide chain elongation. Functionally, involved in peptide bond synthesis. Stimulates efficient translation and peptide-bond synthesis on native or reconstituted 70S ribosomes in vitro. Probably functions indirectly by altering the affinity of the ribosome for aminoacyl-tRNA, thus increasing their reactivity as acceptors for peptidyl transferase. The chain is Elongation factor P 2 (efp2) from Chlamydia trachomatis serovar D (strain ATCC VR-885 / DSM 19411 / UW-3/Cx).